Reading from the N-terminus, the 245-residue chain is Tetraspanin-6 (245 aa).

Residues 1 to 19 (MASPSRRLQTKPVITCFKS) lie on the Cytoplasmic side of the membrane. Residues 20 to 40 (VLLIYTFIFWITGVILLAVGI) traverse the membrane as a helical segment. Residues 41-59 (WGKVSLENYFSLLNEKATN) lie on the Extracellular side of the membrane. A helical membrane pass occupies residues 60–80 (VPFVLIATGTVIILLGTFGCF). At 81–93 (ATCRASAWMLKLY) the chain is on the cytoplasmic side. A helical membrane pass occupies residues 94-114 (AMFLTLIFLVELVAAIVGFVF). Residues 115–208 (RHEIKNSFKN…IKVMTIIESE (94 aa)) lie on the Extracellular side of the membrane. N134 carries N-linked (GlcNAc...) asparagine glycosylation. A helical transmembrane segment spans residues 209–229 (MGVVAGISFGVACFQLIGIFL). The Cytoplasmic segment spans residues 230 to 245 (AYCLSRAITNNQYEIV).

This sequence belongs to the tetraspanin (TM4SF) family.

It is found in the membrane. The sequence is that of Tetraspanin-6 (TSPAN6) from Pongo abelii (Sumatran orangutan).